The primary structure comprises 23 residues: Coenzyme PQQ synthesis protein A (23 aa).

Residues 15–19 (EVTLY) constitute a cross-link (pyrroloquinoline quinone (Glu-Tyr)).

This sequence belongs to the PqqA family.

It participates in cofactor biosynthesis; pyrroloquinoline quinone biosynthesis. Required for coenzyme pyrroloquinoline quinone (PQQ) biosynthesis. PQQ is probably formed by cross-linking a specific glutamate to a specific tyrosine residue and excising these residues from the peptide. The chain is Coenzyme PQQ synthesis protein A from Colwellia psychrerythraea (strain 34H / ATCC BAA-681) (Vibrio psychroerythus).